The sequence spans 1212 residues: Nucleolar protein 6 (1212 aa).

Disordered stretches follow at residues 1 to 72 (MGKI…PVSI) and 1156 to 1212 (KREQ…KSLS). Residues 1197-1212 (LKRKSLIKSRPLKSLS) are compositionally biased toward basic residues.

The protein belongs to the NRAP family. As to quaternary structure, part of the small subunit (SSU) processome, composed of more than 70 proteins and the RNA chaperone small nucleolar RNA (snoRNA) U3.

It is found in the nucleus. Its subcellular location is the nucleolus. The protein resides in the chromosome. Its function is as follows. Part of the small subunit (SSU) processome, first precursor of the small eukaryotic ribosomal subunit. During the assembly of the SSU processome in the nucleolus, many ribosome biogenesis factors, an RNA chaperone and ribosomal proteins associate with the nascent pre-rRNA and work in concert to generate RNA folding, modifications, rearrangements and cleavage as well as targeted degradation of pre-ribosomal RNA by the RNA exosome. This Drosophila persimilis (Fruit fly) protein is Nucleolar protein 6.